The sequence spans 375 residues: Succinyl-diaminopimelate desuccinylase (375 aa).

Residue H66 coordinates Zn(2+). D68 is a catalytic residue. D99 is a binding site for Zn(2+). E133 (proton acceptor) is an active-site residue. Positions 134, 162, and 348 each coordinate Zn(2+).

It belongs to the peptidase M20A family. DapE subfamily. Homodimer. The cofactor is Zn(2+). Co(2+) is required as a cofactor.

It carries out the reaction N-succinyl-(2S,6S)-2,6-diaminopimelate + H2O = (2S,6S)-2,6-diaminopimelate + succinate. Its pathway is amino-acid biosynthesis; L-lysine biosynthesis via DAP pathway; LL-2,6-diaminopimelate from (S)-tetrahydrodipicolinate (succinylase route): step 3/3. In terms of biological role, catalyzes the hydrolysis of N-succinyl-L,L-diaminopimelic acid (SDAP), forming succinate and LL-2,6-diaminopimelate (DAP), an intermediate involved in the bacterial biosynthesis of lysine and meso-diaminopimelic acid, an essential component of bacterial cell walls. This Salmonella agona (strain SL483) protein is Succinyl-diaminopimelate desuccinylase.